The following is a 99-amino-acid chain: MNPDNYLYLAALIFTIGAAGVMLRRNAIVVFMSVELMLNAANLAFVTFARMHGNLDGQVIAFFTMVVAATEVVVGLGIIMTIFRTRRSASVDDADVLKF.

A run of 3 helical transmembrane segments spans residues 3-23, 28-48, and 59-79; these read PDNYLYLAALIFTIGAAGVML, IVVFMSVELMLNAANLAFVTF, and VIAFFTMVVAATEVVVGLGII.

This sequence belongs to the complex I subunit 4L family. In terms of assembly, NDH-1 is composed of 14 different subunits. Subunits NuoA, H, J, K, L, M, N constitute the membrane sector of the complex.

It is found in the cell membrane. The enzyme catalyses a quinone + NADH + 5 H(+)(in) = a quinol + NAD(+) + 4 H(+)(out). Functionally, NDH-1 shuttles electrons from NADH, via FMN and iron-sulfur (Fe-S) centers, to quinones in the respiratory chain. The immediate electron acceptor for the enzyme in this species is believed to be a menaquinone. Couples the redox reaction to proton translocation (for every two electrons transferred, four hydrogen ions are translocated across the cytoplasmic membrane), and thus conserves the redox energy in a proton gradient. This is NADH-quinone oxidoreductase subunit K from Mycobacteroides abscessus (strain ATCC 19977 / DSM 44196 / CCUG 20993 / CIP 104536 / JCM 13569 / NCTC 13031 / TMC 1543 / L948) (Mycobacterium abscessus).